We begin with the raw amino-acid sequence, 220 residues long: Large ribosomal subunit protein bL9 (220 aa).

Residues 167–184 show a composition bias toward low complexity; it reads AAAEVEQAEDVAAAEQQD. A disordered region spans residues 167-220; that stretch reads AAAEVEQAEDVAAAEQQDSSPVDDHADDADGVADGEGRDEGAGDASDEEEMPST. The span at 211–220 shows a compositional bias: acidic residues; it reads ASDEEEMPST.

It belongs to the bacterial ribosomal protein bL9 family.

Binds to the 23S rRNA. The sequence is that of Large ribosomal subunit protein bL9 from Anaplasma marginale (strain Florida).